The primary structure comprises 222 residues: GTP cyclohydrolase 1 (222 aa).

Residues C111, H114, and C182 each coordinate Zn(2+).

It belongs to the GTP cyclohydrolase I family. In terms of assembly, toroid-shaped homodecamer, composed of two pentamers of five dimers.

It catalyses the reaction GTP + H2O = 7,8-dihydroneopterin 3'-triphosphate + formate + H(+). It functions in the pathway cofactor biosynthesis; 7,8-dihydroneopterin triphosphate biosynthesis; 7,8-dihydroneopterin triphosphate from GTP: step 1/1. This Salmonella choleraesuis (strain SC-B67) protein is GTP cyclohydrolase 1.